The primary structure comprises 219 residues: Claudin-20 (219 aa).

Residues 1–7 (MASAGLQ) are Cytoplasmic-facing. Residues 8–28 (LLAFILALSGVSGVLTATLLP) traverse the membrane as a helical segment. At 29-81 (NWKVNVDVDSNIITAIVQLHGLWMDCTWYSTGMFSCALKHSILSLPIHVQAAR) the chain is on the extracellular side. The helical transmembrane segment at 82-102 (ATMVLACVLSALGICTSTVGM) threads the bilayer. At 103-118 (KCTRLGGDRETKSHAS) the chain is on the cytoplasmic side. The helical transmembrane segment at 119–139 (FAGGVCFMSAGISSLISTVWY) threads the bilayer. Residues 140 to 160 (TKEIIANFLDLTVPESNKHEP) lie on the Extracellular side of the membrane. A helical transmembrane segment spans residues 161–181 (GGAIYIGFISAMLLFISGMIF). Residues 182-219 (CTSCIKRNPEARLDPPTQQPISNTQLENNSTHNLKDYV) are Cytoplasmic-facing. The segment at 193–219 (RLDPPTQQPISNTQLENNSTHNLKDYV) is disordered. Residues 200–213 (QPISNTQLENNSTH) are compositionally biased toward polar residues.

Belongs to the claudin family.

The protein localises to the cell junction. Its subcellular location is the tight junction. It is found in the cell membrane. Functionally, plays a major role in tight junction-specific obliteration of the intercellular space, through calcium-independent cell-adhesion activity. The protein is Claudin-20 (CLDN20) of Homo sapiens (Human).